A 297-amino-acid chain; its full sequence is Large ribosomal subunit protein uL18 (297 aa).

Belongs to the universal ribosomal protein uL18 family. Component of the large ribosomal subunit (LSU).

It is found in the cytoplasm. It localises to the nucleus. In terms of biological role, component of the ribosome, a large ribonucleoprotein complex responsible for the synthesis of proteins in the cell. The small ribosomal subunit (SSU) binds messenger RNAs (mRNAs) and translates the encoded message by selecting cognate aminoacyl-transfer RNA (tRNA) molecules. The large subunit (LSU) contains the ribosomal catalytic site termed the peptidyl transferase center (PTC), which catalyzes the formation of peptide bonds, thereby polymerizing the amino acids delivered by tRNAs into a polypeptide chain. The nascent polypeptides leave the ribosome through a tunnel in the LSU and interact with protein factors that function in enzymatic processing, targeting, and the membrane insertion of nascent chains at the exit of the ribosomal tunnel. This Aedes aegypti (Yellowfever mosquito) protein is Large ribosomal subunit protein uL18 (RpL5).